The following is a 277-amino-acid chain: Formamidopyrimidine-DNA glycosylase (277 aa).

Pro-2 functions as the Schiff-base intermediate with DNA in the catalytic mechanism. Residue Glu-3 is the Proton donor of the active site. Lys-58 functions as the Proton donor; for beta-elimination activity in the catalytic mechanism. Residues His-94, Arg-113, and Arg-156 each coordinate DNA. Residues 241-277 form an FPG-type zinc finger; sequence LVYGREGVPCPNCGAEHPIQRITQAGRSTFFCPTCQK. Catalysis depends on Arg-267, which acts as the Proton donor; for delta-elimination activity.

It belongs to the FPG family. As to quaternary structure, monomer. The cofactor is Zn(2+).

The catalysed reaction is Hydrolysis of DNA containing ring-opened 7-methylguanine residues, releasing 2,6-diamino-4-hydroxy-5-(N-methyl)formamidopyrimidine.. The enzyme catalyses 2'-deoxyribonucleotide-(2'-deoxyribose 5'-phosphate)-2'-deoxyribonucleotide-DNA = a 3'-end 2'-deoxyribonucleotide-(2,3-dehydro-2,3-deoxyribose 5'-phosphate)-DNA + a 5'-end 5'-phospho-2'-deoxyribonucleoside-DNA + H(+). Its function is as follows. Involved in base excision repair of DNA damaged by oxidation or by mutagenic agents. Acts as a DNA glycosylase that recognizes and removes damaged bases. Has a preference for oxidized purines, such as 7,8-dihydro-8-oxoguanine (8-oxoG). Has AP (apurinic/apyrimidinic) lyase activity and introduces nicks in the DNA strand. Cleaves the DNA backbone by beta-delta elimination to generate a single-strand break at the site of the removed base with both 3'- and 5'-phosphates. This Gluconobacter oxydans (strain 621H) (Gluconobacter suboxydans) protein is Formamidopyrimidine-DNA glycosylase.